Consider the following 486-residue polypeptide: Transcriptional adapter 2-beta (486 aa).

The ZZ-type zinc-finger motif lies at 4-59 (LGKKYCVNCLADVTNLRIRCAECQDIELCPECFSAGAEIGNHRRWHGYQQVDGGRF). Zn(2+) is bound by residues Cys-9, Cys-12, Cys-23, Cys-26, Cys-32, Cys-35, His-45, and His-49. The SANT domain occupies 65 to 118 (EAEGGWTSREEQSLLDAIEQYGFGNWEDMAAHVGASRTPQEVMDHYVSMYIHGN). Disordered stretches follow at residues 237–291 (KKDK…EKGQ) and 343–377 (EYEA…TAGL). Gly residues-rich tracts occupy residues 247–262 (GTVG…GSGS) and 367–377 (SSGGGGGTAGL).

The protein resides in the nucleus. Functionally, transcriptional coactivator. This is Transcriptional adapter 2-beta (tada2b) from Danio rerio (Zebrafish).